The chain runs to 85 residues: Exodeoxyribonuclease 7 small subunit (85 aa).

The protein belongs to the XseB family. In terms of assembly, heterooligomer composed of large and small subunits.

It localises to the cytoplasm. It catalyses the reaction Exonucleolytic cleavage in either 5'- to 3'- or 3'- to 5'-direction to yield nucleoside 5'-phosphates.. Bidirectionally degrades single-stranded DNA into large acid-insoluble oligonucleotides, which are then degraded further into small acid-soluble oligonucleotides. The protein is Exodeoxyribonuclease 7 small subunit of Mycobacterium bovis (strain ATCC BAA-935 / AF2122/97).